We begin with the raw amino-acid sequence, 341 residues long: Solute carrier family 25 member 43 (341 aa).

3 Solcar repeats span residues 11 to 101 (TGSQ…MDDL), 105 to 185 (SQWS…LLVY), and 200 to 298 (SHLQ…LYQN). The next 6 helical transmembrane spans lie at 16–36 (LLCA…LELA), 68–88 (LWKG…VQLA), 110–130 (IVTG…TDLI), 166–186 (GVSL…LVYM), 205–225 (FANV…FDTV), and 262–282 (VLGL…YFGV).

Belongs to the mitochondrial carrier (TC 2.A.29) family.

The protein localises to the mitochondrion inner membrane. This is Solute carrier family 25 member 43 (Slc25a43) from Mus musculus (Mouse).